The following is a 751-amino-acid chain: Cellulose synthase-like protein G3 (751 aa).

The next 2 membrane-spanning stretches (helical) occupy residues 47-67 (IYAV…VHSL) and 72-92 (TTLI…MWAT). Residues Asp161 and Asp466 contribute to the active site. Helical transmembrane passes span 543–563 (CWAF…LALL), 577–597 (FWLY…DFVL), 617–639 (FSSH…THGF), 674–694 (TVAI…FAWG), 697–717 (LVLE…IYEA), and 731–751 (VCFV…VFLK).

The protein belongs to the glycosyltransferase 2 family. Plant cellulose synthase-like G subfamily.

The protein resides in the golgi apparatus membrane. Functionally, thought to be a Golgi-localized beta-glycan synthase that polymerize the backbones of noncellulosic polysaccharides (hemicelluloses) of plant cell wall. The protein is Cellulose synthase-like protein G3 (CSLG3) of Arabidopsis thaliana (Mouse-ear cress).